Here is a 62-residue protein sequence, read N- to C-terminus: Conotoxin Pn-B0151 (62 aa).

The N-terminal stretch at M1 to A22 is a signal peptide. Positions L23–N48 are excised as a propeptide.

This sequence belongs to the conotoxin T superfamily. In terms of processing, contains 2 disulfide bonds that can be either 'C1-C3, C2-C4' or 'C1-C4, C2-C3', since these disulfide connectivities have been observed for conotoxins with cysteine framework V (for examples, see AC P0DQQ7 and AC P81755). In terms of tissue distribution, expressed by the venom duct.

The protein localises to the secreted. The protein is Conotoxin Pn-B0151 of Conus pennaceus (Feathered cone).